The following is a 215-amino-acid chain: NAD(P)H-quinone oxidoreductase subunit I (215 aa).

4Fe-4S ferredoxin-type domains are found at residues 55–84 (GRIH…VDWV) and 95–124 (RNYS…MTEE). Positions 64, 67, 70, 74, 104, 107, 110, and 114 each coordinate [4Fe-4S] cluster. The segment at 166 to 215 (AGEMDPHGVPNDRPRAGQLPSQVLETLAPPAKVGAKNEGQSTGTTQEGEA) is disordered. Over residues 169–180 (MDPHGVPNDRPR) the composition is skewed to basic and acidic residues. Positions 203–215 (EGQSTGTTQEGEA) are enriched in polar residues.

Belongs to the complex I 23 kDa subunit family. As to quaternary structure, NDH-1 is composed of at least 11 different subunits. Requires [4Fe-4S] cluster as cofactor.

It is found in the cellular thylakoid membrane. It catalyses the reaction a plastoquinone + NADH + (n+1) H(+)(in) = a plastoquinol + NAD(+) + n H(+)(out). It carries out the reaction a plastoquinone + NADPH + (n+1) H(+)(in) = a plastoquinol + NADP(+) + n H(+)(out). Its function is as follows. NDH-1 shuttles electrons from an unknown electron donor, via FMN and iron-sulfur (Fe-S) centers, to quinones in the respiratory and/or the photosynthetic chain. The immediate electron acceptor for the enzyme in this species is believed to be plastoquinone. Couples the redox reaction to proton translocation, and thus conserves the redox energy in a proton gradient. This is NAD(P)H-quinone oxidoreductase subunit I from Parasynechococcus marenigrum (strain WH8102).